The following is an 88-amino-acid chain: Arminin 7965 (88 aa).

Residues 1–18 (MKTVFAILFLTFIAFTYA) form the signal peptide. The propeptide occupies 19–57 (KSYEDVKEEIKNEVEREIFEDLEEESDVLDSNVRELNDA). An Alanine amide modification is found at Ala-85.

It belongs to the arminin family. In terms of tissue distribution, expressed in entodermal epithelium along the body column.

The protein localises to the secreted. It localises to the target cell membrane. In terms of biological role, antimicrobial peptide with a broad-spectrum antimicrobial activity. Keeps its antibacterial activity under a wide range of salt concentrations that mimic physiological conditions of human blood, which is surprising, since Hydra is an obligate freshwater animal with nearly no salt tolerance. Does not affect red blood cells. The chain is Arminin 7965 from Hydra vulgaris (Hydra).